A 63-amino-acid chain; its full sequence is Lantibiotic mutacin-1140 (63 aa).

Positions 1–41 (MSNTQLLEVLGTETFDVQEDLFAFDTTDTTIVASNDDPDTR) are excised as a propeptide. Positions 44–48 (SWSLC) form a cross-link, lanthionine (Ser-Cys). Serine 46 carries the post-translational modification 2,3-didehydroalanine (Ser). The segment at residues 49-52 (TPGC) is a cross-link (beta-methyllanthionine (Thr-Cys)). Threonine 55 bears the 2,3-didehydrobutyrine mark. A cross-link (lanthionine (Ser-Cys)) is located at residues 57–62 (SFNSYC). The segment at residues 60–63 (SYCC) is a cross-link (S-(2-aminovinyl)-D-cysteine (Ser-Cys)).

This sequence belongs to the type A lantibiotic family. In terms of processing, maturation of lantibiotics involves the enzymatic conversion of Thr, and Ser into dehydrated AA and the formation of thioether bonds with cysteine. The C-terminal lanthionine undergoes decarboxylation. This is followed by membrane translocation and cleavage of the modified precursor. The structure of the 2,3-didehydrobutyrine is not discussed in PubMed:11082191.

Functionally, lanthionine-containing peptide antibiotic (lantibiotic) active on Gram-positive bacteria. The bactericidal activity of lantibiotics is based on depolarization of energized bacterial cytoplasmic membranes, initiated by the formation of aqueous transmembrane pores. The protein is Lantibiotic mutacin-1140 (lanA) of Streptococcus mutans.